The sequence spans 150 residues: Peptide deformylase 2 (150 aa).

Fe cation contacts are provided by cysteine 89 and histidine 131. Residue glutamate 132 is part of the active site. Histidine 135 is a Fe cation binding site.

The protein belongs to the polypeptide deformylase family. Fe(2+) is required as a cofactor.

The catalysed reaction is N-terminal N-formyl-L-methionyl-[peptide] + H2O = N-terminal L-methionyl-[peptide] + formate. Its function is as follows. Removes the formyl group from the N-terminal Met of newly synthesized proteins. Requires at least a dipeptide for an efficient rate of reaction. N-terminal L-methionine is a prerequisite for activity but the enzyme has broad specificity at other positions. The polypeptide is Peptide deformylase 2 (Clostridium acetobutylicum (strain ATCC 824 / DSM 792 / JCM 1419 / IAM 19013 / LMG 5710 / NBRC 13948 / NRRL B-527 / VKM B-1787 / 2291 / W)).